The following is a 349-amino-acid chain: MDLADLVKDVKRELSFSELKGKRVSIDGYNALYQFLAAIRQPDGTPLMDSQGRVTSHLSGLFYRTINILEEGVIPIYVFDGKPPEQKSEELERRRKAKEEAERKLERAKSEGKIEELRKYSQAILRLSNIMVEESKKLLRAMGIPIVQAPSEGEAEAAYLNKLGLSWAAASQDYDAILFGAKRLVRNLTITGKRKLPNKDVYVEIKPELIETEILLKKLGITREQLIDIGILIGTDYNPDGIRGIGPERALKIIKKYGKIEKAMEYGEISKKDINFNIDEIRGLFLNPQVVKPEEALDLNEPNGEDIINILVYEHNFSEERVKNGIERLTKAIKEAKGASRQTGLDRWF.

An N-domain region spans residues 1-98; that stretch reads MDLADLVKDV…EELERRRKAK (98 aa). Mg(2+) is bound by residues aspartate 27, aspartate 80, glutamate 152, glutamate 154, aspartate 173, aspartate 175, and aspartate 236. The segment at 116-258 is I-domain; it reads ELRKYSQAIL…RALKIIKKYG (143 aa). The interaction with PCNA stretch occupies residues 341 to 349; the sequence is RQTGLDRWF.

It belongs to the XPG/RAD2 endonuclease family. FEN1 subfamily. Interacts with PCNA via subunit PCNA1. Requires Mg(2+) as cofactor.

Its activity is regulated as follows. Heterotrimeric PCNA stimulates the nuclease activity without altering cleavage specificity. Functionally, structure-specific nuclease with 5'-flap endonuclease and 5'-3' exonuclease activities involved in DNA replication and repair. During DNA replication, cleaves the 5'-overhanging flap structure that is generated by displacement synthesis when DNA polymerase encounters the 5'-end of a downstream Okazaki fragment. Binds the unpaired 3'-DNA end and kinks the DNA to facilitate 5' cleavage specificity. Cleaves one nucleotide into the double-stranded DNA from the junction in flap DNA, leaving a nick for ligation. Also involved in the base excision repair (BER) pathway. Acts as a genome stabilization factor that prevents flaps from equilibrating into structures that lead to duplications and deletions. Also possesses 5'-3' exonuclease activity on nicked or gapped double-stranded DNA. DNA polymerase I, DNA ligase and the flap endonuclease may be constitutively associated with the PCNA heterotrimer forming a scanning complex able to couple DNA synthesis and Okazaki fragment maturation. The polypeptide is Flap endonuclease 1 (Saccharolobus solfataricus (strain ATCC 35092 / DSM 1617 / JCM 11322 / P2) (Sulfolobus solfataricus)).